The chain runs to 475 residues: tRNA-2-methylthio-N(6)-dimethylallyladenosine synthase (475 aa).

Over residues 1-10 (MHETTLKREG) the composition is skewed to basic and acidic residues. Positions 1-25 (MHETTLKREGASTPSNPTPSTHAAG) are disordered. Polar residues predominate over residues 12-23 (STPSNPTPSTHA). The 118-residue stretch at 27–144 (GKIYIRTFGC…LPELIRRRRD (118 aa)) folds into the MTTase N-terminal domain. Cys36, Cys73, Cys107, Cys181, Cys185, and Cys188 together coordinate [4Fe-4S] cluster. A Radical SAM core domain is found at 167 to 400 (RVEGATAFVS…QALINEQAAA (234 aa)). A TRAM domain is found at 403 to 466 (QSMVGTRQRL…TNSLRGRVAG (64 aa)).

The protein belongs to the methylthiotransferase family. MiaB subfamily. In terms of assembly, monomer. The cofactor is [4Fe-4S] cluster.

Its subcellular location is the cytoplasm. It catalyses the reaction N(6)-dimethylallyladenosine(37) in tRNA + (sulfur carrier)-SH + AH2 + 2 S-adenosyl-L-methionine = 2-methylsulfanyl-N(6)-dimethylallyladenosine(37) in tRNA + (sulfur carrier)-H + 5'-deoxyadenosine + L-methionine + A + S-adenosyl-L-homocysteine + 2 H(+). Its function is as follows. Catalyzes the methylthiolation of N6-(dimethylallyl)adenosine (i(6)A), leading to the formation of 2-methylthio-N6-(dimethylallyl)adenosine (ms(2)i(6)A) at position 37 in tRNAs that read codons beginning with uridine. The sequence is that of tRNA-2-methylthio-N(6)-dimethylallyladenosine synthase from Bordetella avium (strain 197N).